Here is a 985-residue protein sequence, read N- to C-terminus: Regulator of telomere elongation helicase 1 homolog (985 aa).

In terms of domain architecture, Helicase ATP-binding spans 7–303; the sequence is AGIPVHFPFE…QDMGGDEPKD (297 aa). 42 to 49 is an ATP binding site; that stretch reads SPTGTGKT. The [4Fe-4S] cluster site is built by C146, C164, C173, and C209. The short motif at 252-255 is the DEAH box element; the sequence is DEAH. The segment at 858-884 is disordered; it reads GSSGMVKIHKRERSSPTQPESSSQVSK. Positions 872 to 882 are enriched in polar residues; it reads SPTQPESSSQV. At T874 the chain carries Phosphothreonine.

It belongs to the helicase family. RAD3/XPD subfamily.

The protein localises to the nucleus. It carries out the reaction ATP + H2O = ADP + phosphate + H(+). Functionally, a probable ATP-dependent DNA helicase implicated in DNA repair and the maintenance of genomic stability. Acts as an anti-recombinase to counteract toxic recombination and limit crossover during meiosis. Regulates meiotic recombination and crossover homeostasis by physically dissociating strand invasion events and thereby promotes noncrossover repair by meiotic synthesis dependent strand annealing (SDSA) as well as disassembly of D loop recombination intermediates. The polypeptide is Regulator of telomere elongation helicase 1 homolog (Drosophila yakuba (Fruit fly)).